The chain runs to 396 residues: MIISAASDYRAAAQRILPPFLFHYMDGGAYSEYTLRRNVEDLSEVALRQRILKNMSDLSLETTLFNEKLSMPVALGPVGLCGMYARRGEVQAAKAADAHGIPFTLSTVSVCPIEEVAPAIKRPMWFQLYVLRDRGFMRNALERAKAAGCSTLVFTVDMPTPGARYRDAHSGMSGPNAAMRRYLQAVTHPQWAWDVGLNGRPHDLGNISAYLGKPTGLEDYIGWLANNFDPSISWKDLEWIRDFWDGPMVIKGILDPEDARDAVRFGADGIVVSNHGGRQLDGVLSSACALPAIADAVKGDIAILADSGIRNGLDVVRMIALGADTVLLGRAFLYALATAGQAGVANLLNLIEKEMKVAMTLTGAKSISEITQDSLVQVLGKELPAALAPMAKGNAA.

One can recognise an FMN hydroxy acid dehydrogenase domain in the interval 1 to 380 (MIISAASDYR…TQDSLVQVLG (380 aa)). Tyrosine 24 is a binding site for substrate. Residues serine 106 and glutamine 127 each contribute to the FMN site. A substrate-binding site is contributed by tyrosine 129. An FMN-binding site is contributed by threonine 155. Arginine 164 lines the substrate pocket. Lysine 251 contributes to the FMN binding site. The Proton acceptor role is filled by histidine 275. Arginine 278 contributes to the substrate binding site. 306 to 330 (DSGIRNGLDVVRMIALGADTVLLGR) lines the FMN pocket.

This sequence belongs to the FMN-dependent alpha-hydroxy acid dehydrogenase family. Requires FMN as cofactor.

It is found in the cell inner membrane. The enzyme catalyses (S)-lactate + A = pyruvate + AH2. Functionally, catalyzes the conversion of L-lactate to pyruvate. Is coupled to the respiratory chain. The chain is L-lactate dehydrogenase from Escherichia coli O1:K1 / APEC.